Reading from the N-terminus, the 237-residue chain is Protein VP5 (237 aa).

At 1–148 the chain is on the cytoplasmic side; the sequence is MLSIIRRKTR…TKQRCKANLR (148 aa). Residues 84–237 form a disordered region; sequence SSSKDPDISG…SKLGKSRDIC (154 aa). Composition is skewed to basic and acidic residues over residues 85–97 and 116–130; these read SSKDPDISGQKDK and SRVREHEPIHEHEPI. A helical transmembrane segment spans residues 149-165; that stretch reads GDSGFVSIGRSNHPKLS. Residues 166 to 237 lie on the Extracellular side of the membrane; sequence REDCHNTRVP…SKLGKSRDIC (72 aa). Basic residues predominate over residues 214-231; the sequence is RSHRRKKAKTRTKTSKLG.

It is found in the host membrane. The polypeptide is Protein VP5 (VP5) (Drosophila x virus (isolate Chung/1996) (DXV)).